We begin with the raw amino-acid sequence, 538 residues long: Natural resistance-associated macrophage protein 1 (538 aa).

Residues 1 to 36 (MTGDTDPPKQSRTQYGSISSSPSPGPPQVPPGGTYL) form a disordered region. At 1–54 (MTGDTDPPKQSRTQYGSISSSPSPGPPQVPPGGTYLSEKIPIPNAEPGTFSLRK) the chain is on the cytoplasmic side. A helical membrane pass occupies residues 55-75 (LWAFTGPGFLMSIAYLDPGNI). Residues 76 to 81 (QSDLQA) are Extracellular-facing. A helical membrane pass occupies residues 82–102 (GAVAGFKLLWVLLWATVLGLL). The Cytoplasmic segment spans residues 103–139 (CQRLAARLGVVTGKDLGEICHLYYPKVPRTLLWLNME). A helical transmembrane segment spans residues 140-160 (LAIVGSDMQEVIGTAIAFNLL). Residues 161–164 (SAGR) lie on the Extracellular side of the membrane. The helical transmembrane segment at 165 to 185 (IPLWGGVLITVVDTFFFLYLN) threads the bilayer. Residues 186-193 (NYGLRKLE) lie on the Cytoplasmic side of the membrane. A helical membrane pass occupies residues 194–214 (AFFAFLIAIMAFTFGYEYVVA). Residues 215 to 240 (RPAQGALLRGLFLPSCSGCGQPELLQ) lie on the Extracellular side of the membrane. A helical membrane pass occupies residues 241–261 (AVGIVGAIIMPHNIYLHSALV). Over 262 to 286 (KSREVDRTRREDIREANMYFLIEST) the chain is Cytoplasmic. A helical membrane pass occupies residues 287 to 307 (IALFVSFFINLFVMAVFGQAF). Residues 308–346 (YQQTNQAAFNICANSSLHDYAKIFPRNNLTVAVDFYQGG) are Extracellular-facing. N-linked (GlcNAc...) asparagine glycans are attached at residues N321 and N335. The helical transmembrane segment at 347-367 (VILGCLFGPAALYIWAVGLLA) threads the bilayer. Residues 368–394 (AGQSSTMTGTYAGQFVMEGFLKLRWSR) lie on the Cytoplasmic side of the membrane. A helical transmembrane segment spans residues 395 to 415 (FARLLLTRSCAILPALLVAVF). The Extracellular portion of the chain corresponds to 416–432 (KELQDLSSLNDLLNVLQ). A helical membrane pass occupies residues 433-453 (SLLLPFAVLPILTFTSMPALM). The Cytoplasmic portion of the chain corresponds to 454–468 (QEFASGRVNKVITSS). A helical membrane pass occupies residues 469 to 489 (IMLLVCAINFYFLVSYLPSLP). Residues 490-492 (HPA) lie on the Extracellular side of the membrane. A helical transmembrane segment spans residues 493–513 (YFGLVALLAVIYLGLTTYLVW). Topologically, residues 514–538 (TCLIAHGATLLVHSSHQHFLYGLLE) are cytoplasmic.

It belongs to the NRAMP family.

It is found in the late endosome membrane. Its subcellular location is the lysosome membrane. The enzyme catalyses Zn(2+)(in) + H(+)(out) = Zn(2+)(out) + H(+)(in). It catalyses the reaction Fe(2+)(in) + H(+)(out) = Fe(2+)(out) + H(+)(in). The catalysed reaction is Mn(2+)(in) + H(+)(out) = Mn(2+)(out) + H(+)(in). Functionally, macrophage-specific antiporter that fluxes metal ions in either direction against a proton gradient. Localized to late endosomal lysosomal membranes, delivers bivalent cations from the cytosol into these acidic compartments where they may directly affect antimicrobial activity. Involved in iron metabolism and host natural resistance to infection with intracellular parasites. Pathogen resistance involves sequestration of Fe(2+) and Mn(2+), cofactors of both prokaryotic and eukaryotic catalases and superoxide dismutases, not only to protect the macrophage against its own generation of reactive oxygen species, but to deny the cations to the pathogen for synthesis of its protective enzymes. This Sus scrofa (Pig) protein is Natural resistance-associated macrophage protein 1 (SLC11A1).